The sequence spans 335 residues: D-alanine--D-alanine ligase (335 aa).

The 206-residue stretch at 124–329 folds into the ATP-grasp domain; the sequence is KMWFSALGVP…FTHYLYSNIK (206 aa). ATP is bound at residue 154 to 209; that stretch reads ALENWGSIFIKAASQGSSVGCYRVDSQDELVSSLEQAFSFSPYVIVEKTINARELE. Mg(2+) is bound by residues D283, E296, and N298.

The protein belongs to the D-alanine--D-alanine ligase family. Requires Mg(2+) as cofactor. The cofactor is Mn(2+).

Its subcellular location is the cytoplasm. The enzyme catalyses 2 D-alanine + ATP = D-alanyl-D-alanine + ADP + phosphate + H(+). The protein operates within cell wall biogenesis; peptidoglycan biosynthesis. In terms of biological role, cell wall formation. The sequence is that of D-alanine--D-alanine ligase from Shewanella woodyi (strain ATCC 51908 / MS32).